Reading from the N-terminus, the 181-residue chain is Acireductone dioxygenase (181 aa).

Positions 97, 99, 103, and 141 each coordinate Fe(2+). Ni(2+)-binding residues include His-97, His-99, Glu-103, and His-141.

This sequence belongs to the acireductone dioxygenase (ARD) family. In terms of assembly, monomer. Fe(2+) is required as a cofactor. Requires Ni(2+) as cofactor.

The catalysed reaction is 1,2-dihydroxy-5-(methylsulfanyl)pent-1-en-3-one + O2 = 3-(methylsulfanyl)propanoate + CO + formate + 2 H(+). It carries out the reaction 1,2-dihydroxy-5-(methylsulfanyl)pent-1-en-3-one + O2 = 4-methylsulfanyl-2-oxobutanoate + formate + 2 H(+). Its pathway is amino-acid biosynthesis; L-methionine biosynthesis via salvage pathway; L-methionine from S-methyl-5-thio-alpha-D-ribose 1-phosphate: step 5/6. Functionally, catalyzes 2 different reactions between oxygen and the acireductone 1,2-dihydroxy-3-keto-5-methylthiopentene (DHK-MTPene) depending upon the metal bound in the active site. Fe-containing acireductone dioxygenase (Fe-ARD) produces formate and 2-keto-4-methylthiobutyrate (KMTB), the alpha-ketoacid precursor of methionine in the methionine recycle pathway. Ni-containing acireductone dioxygenase (Ni-ARD) produces methylthiopropionate, carbon monoxide and formate, and does not lie on the methionine recycle pathway. In Pseudomonas savastanoi pv. phaseolicola (strain 1448A / Race 6) (Pseudomonas syringae pv. phaseolicola (strain 1448A / Race 6)), this protein is Acireductone dioxygenase.